Reading from the N-terminus, the 123-residue chain is Small ribosomal subunit protein uS12 (123 aa).

Aspartate 89 carries the post-translational modification 3-methylthioaspartic acid.

This sequence belongs to the universal ribosomal protein uS12 family. As to quaternary structure, part of the 30S ribosomal subunit. Contacts proteins S8 and S17. May interact with IF1 in the 30S initiation complex.

Its function is as follows. With S4 and S5 plays an important role in translational accuracy. Functionally, interacts with and stabilizes bases of the 16S rRNA that are involved in tRNA selection in the A site and with the mRNA backbone. Located at the interface of the 30S and 50S subunits, it traverses the body of the 30S subunit contacting proteins on the other side and probably holding the rRNA structure together. The combined cluster of proteins S8, S12 and S17 appears to hold together the shoulder and platform of the 30S subunit. This is Small ribosomal subunit protein uS12 from Brucella anthropi (strain ATCC 49188 / DSM 6882 / CCUG 24695 / JCM 21032 / LMG 3331 / NBRC 15819 / NCTC 12168 / Alc 37) (Ochrobactrum anthropi).